A 582-amino-acid chain; its full sequence is Vesicular glutamate transporter 2 (582 aa).

Residues 1-71 (MESVKQRILT…CTCFGLPRRY (71 aa)) are Cytoplasmic-facing. A helical transmembrane segment spans residues 72–92 (IIAIMSGLGFCISFGIRCNLG). Residues 93-125 (VAIVDMVNNSTIHRGGKVIKEKAKFNWDPETVG) are Vesicular-facing. N-linked (GlcNAc...) asparagine glycosylation is found at Asn-100 and Asn-101. A helical membrane pass occupies residues 126–146 (MIHGSFFWGYIITQIPGGYIA). Over 147-148 (SR) the chain is Cytoplasmic. A helical transmembrane segment spans residues 149-169 (LAANRVFGAAILLTSTLNMLI). At 170–177 (PSAARVHY) the chain is on the vesicular side. Residues 178–198 (GCVIFVRILQGLVEGVTYPAC) traverse the membrane as a helical segment. Residues 199 to 216 (HGIWSKWAPPLERSRLAT) are Cytoplasmic-facing. The chain crosses the membrane as a helical span at residues 217–237 (TSFCGSYAGAVIAMPLAGILV). Topologically, residues 238 to 244 (QYTGWSS) are vesicular. A helical transmembrane segment spans residues 245–265 (VFYVYGSFGMIWYMFWLLVSY). Residues 266–310 (ESPAKHPTITDEERRYIEESIGESANLLGAMEKFKTPWRKFFTSM) are Cytoplasmic-facing. A helical transmembrane segment spans residues 311–331 (PVYAIIVANFCRSWTFYLLLI). The Vesicular portion of the chain corresponds to 332-349 (SQPAYFEEVFGFEISKVG). Residues 350–370 (MLSAVPHLVMTIIVPIGGQIA) form a helical membrane-spanning segment. Topologically, residues 371–386 (DFLRSKQILSTTTVRK) are cytoplasmic. Residues 387–407 (IMNCGGFGMEATLLLVVGYSH) form a helical membrane-spanning segment. The Vesicular segment spans residues 408–409 (TR). The helical transmembrane segment at 410 to 430 (GVAISFLVLAVGFSGFAISGF) threads the bilayer. Topologically, residues 431–443 (NVNHLDIAPRYAS) are cytoplasmic. A helical transmembrane segment spans residues 444–464 (ILMGISNGVGTLSGMVCPIIV). Over 465-477 (GAMTKNKSREEWQ) the chain is Vesicular. An N-linked (GlcNAc...) asparagine glycan is attached at Asn-470. A helical membrane pass occupies residues 478–498 (YVFLIAALVHYGGVIFYAIFA). Topologically, residues 499–582 (SGEKQPWADP…YNYKDRDDYS (84 aa)) are cytoplasmic.

It belongs to the major facilitator superfamily. Sodium/anion cotransporter family. VGLUT subfamily.

The protein localises to the cytoplasmic vesicle. It localises to the secretory vesicle. It is found in the synaptic vesicle membrane. Its subcellular location is the synapse. The protein resides in the synaptosome. The protein localises to the cell membrane. It catalyses the reaction L-glutamate(out) = L-glutamate(in). The enzyme catalyses 3 Na(+)(out) + phosphate(out) = 3 Na(+)(in) + phosphate(in). The catalysed reaction is phosphate(in) = phosphate(out). It carries out the reaction K(+)(in) + H(+)(out) = K(+)(out) + H(+)(in). It catalyses the reaction chloride(in) = chloride(out). With respect to regulation, chloride channel activity is allosterically activated by lumenal H(+) and Cl(-) leading to synaptic vesicles acidification. The L-glutamate transport activity is allosterically activated by lumenal H(+) and Cl(-). The allosteric requirement for H(+) efficiently prevents non-vesicular efflux across the plasma membrane. The L-glutamate uniporter activity exhibits a biphasic dependence on chloride concentration. Multifunctional transporter that transports L-glutamate as well as multiple ions such as chloride, proton, potassium, sodium and phosphate. At the synaptic vesicle membrane, mainly functions as a uniporter which transports preferentially L-glutamate but also, phosphate from the cytoplasm into synaptic vesicles at presynaptic nerve terminals of excitatory neural cells. The L-glutamate or phosphate uniporter activity is electrogenic and is driven by the proton electrochemical gradient, mainly by the electrical gradient established by the vacuolar H(+)-ATPase across the synaptic vesicle membrane. In addition, functions as a chloride channel that allows a chloride permeation through the synaptic vesicle membrane therefore affects the proton electrochemical gradient and promotes synaptic vesicles acidification. Moreover, functions as a vesicular K(+)/H(+) antiport allowing to maintain the electrical gradient and to decrease chemical gradient and therefore sustain vesicular L-glutamate uptake. The vesicular H(+)/H(+) antiport activity is electroneutral. At the plasma membrane, following exocytosis, functions as a symporter of Na(+) and phosphate from the extracellular space to the cytoplasm allowing synaptic phosphate homeostasis regulation. The symporter activity is driven by an inside negative membrane potential and is electrogenic. Also involved in the regulation of retinal hyaloid vessel regression during postnatal development. May also play a role in the endocrine L-glutamatergic system of other tissues such as pineal gland and pancreas. The protein is Vesicular glutamate transporter 2 of Bos taurus (Bovine).